A 265-amino-acid chain; its full sequence is MLKGFAWIISVGNELLIGRVVNTNAAWLAAKLTYLGYAVRRIVVVPDEENEIVEAFRDAMERSDVVISTGGLGPTPDDITNLAFCKALGVEAEVNEEALRMVREKYESRGYPMTPEREKMAKMPPGAVPLPNPVGTAPGILYQRGDKVVVLLPGVPREMEAIFENSVEPLLKSRGPPVYFSEKVVVVRGVPEADIAPILKEVMKIDPRLYVKSHPKGFEVGAPLLHIHIYASAGSEEEAQGLVKKVAERLVELLKSRPGAEVSTS.

Belongs to the CinA family.

In Pyrobaculum arsenaticum (strain DSM 13514 / JCM 11321 / PZ6), this protein is Protein Pars_0096.